The sequence spans 187 residues: Elongation factor P (187 aa).

It belongs to the elongation factor P family.

It localises to the cytoplasm. Its pathway is protein biosynthesis; polypeptide chain elongation. In terms of biological role, involved in peptide bond synthesis. Stimulates efficient translation and peptide-bond synthesis on native or reconstituted 70S ribosomes in vitro. Probably functions indirectly by altering the affinity of the ribosome for aminoacyl-tRNA, thus increasing their reactivity as acceptors for peptidyl transferase. The protein is Elongation factor P of Fusobacterium nucleatum subsp. nucleatum (strain ATCC 25586 / DSM 15643 / BCRC 10681 / CIP 101130 / JCM 8532 / KCTC 2640 / LMG 13131 / VPI 4355).